Reading from the N-terminus, the 294-residue chain is Urease accessory protein UreD 1 (294 aa).

Positions Met1–Val22 are disordered. A compositionally biased stretch (pro residues) spans Lys11 to Pro21.

Belongs to the UreD family. In terms of assembly, ureD, UreF and UreG form a complex that acts as a GTP-hydrolysis-dependent molecular chaperone, activating the urease apoprotein by helping to assemble the nickel containing metallocenter of UreC. The UreE protein probably delivers the nickel.

It is found in the cytoplasm. In terms of biological role, required for maturation of urease via the functional incorporation of the urease nickel metallocenter. This is Urease accessory protein UreD 1 from Methylorubrum extorquens (strain PA1) (Methylobacterium extorquens).